We begin with the raw amino-acid sequence, 362 residues long: Methylthioribose-1-phosphate isomerase (362 aa).

The active-site Proton donor is the Asp252.

Belongs to the eIF-2B alpha/beta/delta subunits family. MtnA subfamily.

Its subcellular location is the cytoplasm. The protein resides in the nucleus. It carries out the reaction 5-(methylsulfanyl)-alpha-D-ribose 1-phosphate = 5-(methylsulfanyl)-D-ribulose 1-phosphate. It functions in the pathway amino-acid biosynthesis; L-methionine biosynthesis via salvage pathway; L-methionine from S-methyl-5-thio-alpha-D-ribose 1-phosphate: step 1/6. In terms of biological role, catalyzes the interconversion of methylthioribose-1-phosphate (MTR-1-P) into methylthioribulose-1-phosphate (MTRu-1-P). The chain is Methylthioribose-1-phosphate isomerase from Drosophila mojavensis (Fruit fly).